Reading from the N-terminus, the 352-residue chain is Ribosome biogenesis protein BRX1 homolog (352 aa).

The interval 1–55 (MGKFSKIKKVQEEESAHQKMEWEAAGAKDSSSDDSSDESDNDDQPKQATEETRKR) is disordered. Basic and acidic residues predominate over residues 9 to 22 (KVQEEESAHQKMEW). Residues 32–42 (SDDSSDESDND) show a composition bias toward acidic residues. The segment covering 43–55 (DQPKQATEETRKR) has biased composition (basic and acidic residues). The 191-residue stretch at 63–253 (ERVLVLCSRG…MVRLFAGSFE (191 aa)) folds into the Brix domain.

Belongs to the BRX1 family.

It is found in the nucleus. The protein resides in the nucleolus. Required for biogenesis of the 60S ribosomal subunit. The polypeptide is Ribosome biogenesis protein BRX1 homolog (Caenorhabditis elegans).